A 131-amino-acid chain; its full sequence is D-ribose pyranase (131 aa).

The active-site Proton donor is histidine 20. Substrate-binding positions include aspartate 28, histidine 98, and 120-122 (YSN).

This sequence belongs to the RbsD / FucU family. RbsD subfamily. In terms of assembly, homodecamer.

It localises to the cytoplasm. It carries out the reaction beta-D-ribopyranose = beta-D-ribofuranose. Its pathway is carbohydrate metabolism; D-ribose degradation; D-ribose 5-phosphate from beta-D-ribopyranose: step 1/2. Its function is as follows. Catalyzes the interconversion of beta-pyran and beta-furan forms of D-ribose. The chain is D-ribose pyranase from Lactiplantibacillus plantarum (strain ATCC BAA-793 / NCIMB 8826 / WCFS1) (Lactobacillus plantarum).